The following is a 195-amino-acid chain: Thymidine kinase (195 aa).

ATP is bound by residues 9–16 and 89–92; these read ATMNAGKS and DEAQ. E90 acts as the Proton acceptor in catalysis. The Zn(2+) site is built by C147, C149, C184, and H187.

Belongs to the thymidine kinase family. Homotetramer.

Its subcellular location is the cytoplasm. It carries out the reaction thymidine + ATP = dTMP + ADP + H(+). The chain is Thymidine kinase from Rhizobium meliloti (strain 1021) (Ensifer meliloti).